The following is a 355-amino-acid chain: cGAMP-activated phospholipase (355 aa).

The region spanning 17-214 is the PNPLA domain; the sequence is LSLNGGGARG…VANNPSFIGL (198 aa). A GXGXXG motif is present at residues 21–26; it reads GGGARG. Residues 60–64 carry the GXSXG motif; it reads GTSIG. The active-site Nucleophile is S62. D201 serves as the catalytic Proton acceptor. A DGA/G motif is present at residues 201–203; the sequence is DGG.

This sequence belongs to the patatin family.

It carries out the reaction a 1,2-diacyl-sn-glycero-3-phosphocholine + H2O = a 2-acyl-sn-glycero-3-phosphocholine + a fatty acid + H(+). The catalysed reaction is 1,2-di-(9Z-octadecenoyl)-sn-glycero-3-phosphoethanolamine + 2 H2O = sn-glycero-3-phosphoethanolamine + 2 (9Z)-octadecenoate + 2 H(+). Its activity is regulated as follows. Phospholipase activity is specifically activated upon 3',3'-cGAMP (cGAMP) binding. Is not activated by the other cyclic dinucleotides 3',3'-cUAMP, 3',3'-c-diAMP and 3',3'-c-diGMP. Therefore, is specifically activated by only the nucleotide synthesized from its adjacently encoded nucleotidyltransferase (DncV). The cGAMP-activation of lipase is inhibited by T4 phage protein Acb2 (Vs.4). Effector phospholipase of a CBASS antiviral system. CBASS (cyclic oligonucleotide-based antiphage signaling system) provides immunity against bacteriophages. The CD-NTase protein (DncV) synthesizes cyclic nucleotides in response to infection; these serve as specific second messenger signals. The signals activate a diverse range of effectors, leading to bacterial cell death and thus abortive phage infection. A type II-A(GA) CBASS system. In terms of biological role, phospholipase that is activated upon binding to the cyclic dinucleotide (CDN) second messenger 3',3'-cyclic GMP-AMP (3',3'-cGAMP). Then degrades phosphatidylethanolamine (PE) and phosphatidylglycerol (PG), the major phospholipids in the cell membrane of V.cholerae, releasing 16:1 and 18:1 free fatty acids. Upon expression in E.coli with cognate DncV, the cell inner membrane shrinks and separates from the cell wall. Its function is as follows. Protects E.coli against phage infection. When the CBASS operon (capV-dncV-cap2-cap3) is introduced in E.coli MG1655 there is about 100-fold protection against phages P1 and T2. When the operon is introduced in E.coli MG1655 there is a more than 10(3) decrease in the efficiency of T2 plaque formation. Protects 100-fold against phage T5, offers no protection against T7. When the operon is introduced in E.coli MG1655 it protects against phages T2, T4, T5 and T6. Another paper shows the operon confers protection against phages P1, T2, T5 and T6 but not T4 or lambda. The polypeptide is cGAMP-activated phospholipase (Vibrio cholerae serotype O1 (strain ATCC 39315 / El Tor Inaba N16961)).